A 276-amino-acid chain; its full sequence is NAC domain-containing protein 67 (276 aa).

The 154-residue stretch at 17–170 (LPPGFRFHPT…DWVLCRLYNK (154 aa)) folds into the NAC domain.

In terms of tissue distribution, expressed in leaf blades.

The protein localises to the nucleus. Functionally, probable transcription factor involved in stress response. The protein is NAC domain-containing protein 67 of Oryza sativa subsp. japonica (Rice).